Reading from the N-terminus, the 279-residue chain is Probable endonuclease 4 (279 aa).

Zn(2+) is bound by residues His-69, His-109, Glu-145, Asp-179, His-182, His-216, Asp-229, His-231, and Glu-261.

The protein belongs to the AP endonuclease 2 family. It depends on Zn(2+) as a cofactor.

The catalysed reaction is Endonucleolytic cleavage to 5'-phosphooligonucleotide end-products.. In terms of biological role, endonuclease IV plays a role in DNA repair. It cleaves phosphodiester bonds at apurinic or apyrimidinic (AP) sites, generating a 3'-hydroxyl group and a 5'-terminal sugar phosphate. This Chlorobium luteolum (strain DSM 273 / BCRC 81028 / 2530) (Pelodictyon luteolum) protein is Probable endonuclease 4.